The sequence spans 505 residues: Deoxyguanosinetriphosphate triphosphohydrolase (505 aa).

Positions 66–273 constitute an HD domain; sequence RLTHSMEVQQ…MEAADDISYC (208 aa).

The protein belongs to the dGTPase family. Type 1 subfamily. Homotetramer. Requires Mg(2+) as cofactor.

It catalyses the reaction dGTP + H2O = 2'-deoxyguanosine + triphosphate + H(+). In terms of biological role, dGTPase preferentially hydrolyzes dGTP over the other canonical NTPs. The chain is Deoxyguanosinetriphosphate triphosphohydrolase from Salmonella paratyphi A (strain AKU_12601).